The sequence spans 2645 residues: Non-reducing polyketide synthase AC (2645 aa).

The interval 73–2366 (ALQNLNEWLK…TDIVHNAWPM (2294 aa)) is N-terminal acylcarrier protein transacylase domain (SAT). Histidine 260 acts as the Proton donor/acceptor; for transacylase activity in catalysis. Residues 416-834 (DDKIAVIGMA…GSNSSLVVTE (419 aa)) form the Ketosynthase family 3 (KS3) domain. Active-site for beta-ketoacyl synthase activity residues include cysteine 583, histidine 718, and histidine 757. The interval 943–1252 (CFGGQISTYI…HAVSITTDKS (310 aa)) is malonyl-CoA:ACP transacylase (MAT) domain. Positions 1324-1457 (SKGFTSFAGY…GVCSFCSATD (134 aa)) are N-terminal hotdog fold. Positions 1324–1637 (SKGFTSFAGY…YNKVPLPVMR (314 aa)) constitute a PKS/mFAS DH domain. Residues 1330–1641 (FAGYIDGNQR…PLPVMRGILG (312 aa)) form a product template (PT) domain region. The Proton acceptor; for dehydratase activity role is filled by histidine 1359. Positions 1487 to 1637 (NIMQGTANIY…YNKVPLPVMR (151 aa)) are C-terminal hotdog fold. Aspartate 1542 (proton donor; for dehydratase activity) is an active-site residue. Residues 1684–1696 (NGTTGTENPQIKS) show a composition bias toward polar residues. A disordered region spans residues 1684–1716 (NGTTGTENPQIKSKTNKVKKVPTRKSGGSDLET). Residues 1697–1706 (KTNKVKKVPT) are compositionally biased toward basic residues. A Carrier domain is found at 1711 to 1788 (GSDLETPAKT…SLVKYIREIR (78 aa)). At serine 1748 the chain carries O-(pantetheine 4'-phosphoryl)serine. Acidic residues predominate over residues 1794 to 1805 (QNVDDSESESEE). The interval 1794 to 1816 (QNVDDSESESEELQQQATPIDSA) is disordered. Tyrosine 2009 functions as the For methyltransferase activity in the catalytic mechanism. The tract at residues 2023–2197 (EVFVEKIGSS…SVGYGHVDWT (175 aa)) is methyltransferase (CMeT) domain. Residues 2269–2573 (CVLITGATGS…NIIPFYDWVQ (305 aa)) form an NADPH-binding (R) domain region.

It functions in the pathway mycotoxin biosynthesis. Its function is as follows. Non-reducing polyketide synthase; part of the gene cluster that mediates the biosynthesis of the selective antifungal agent ascochitine, an o-quinone methide that plays a possible protective role against other microbial competitors in nature and is considered to be important for pathogenicity of legume-associated Didymella species. The pathway probably begins with the synthesis of a keto-aldehyde intermediate by the ascochitine non-reducing polyketide synthase pksAC from successive condensations of 4 malonyl-CoA units, presumably with a simple acetyl-CoA starter unit. Release of the keto-aldehyde intermediate is consistent with the presence of the C-terminal reductive release domain. The HR-PKS (orf7) probably makes a diketide starter unit which is passed to the non-reducing polyketide synthase pksAC for further extension, producing ascochital and ascochitine. The aldehyde dehydrogenase (orf1), the 2-oxoglutarate-dependent dioxygenase (orf3) and the dehydrogenase (orf9) are probably involved in subsequent oxidations of methyl groups to the carboxylic acid of the heterocyclic ring. The ascochitine gene cluster also includes a gene encoding a short peptide (orf2) that is often found in secondary metabolite gene clusters and which function has still to be determined. This is Non-reducing polyketide synthase AC from Didymella fabae (Leaf and pod spot disease fungus).